Consider the following 316-residue polypeptide: Uracil-DNA glycosylase (316 aa).

The span at 36-79 shows a compositional bias: low complexity; sequence AAAAAPAGAGAGASKPARPSAAARPAKGTPAASAATTATGADAS. Residues 36–91 are disordered; sequence AAAAAPAGAGAGASKPARPSAAARPAKGTPAASAATTATGADASAPPPDPGAPTWD. Asp-159 (proton acceptor) is an active-site residue.

Belongs to the uracil-DNA glycosylase (UDG) superfamily. UNG family.

The protein localises to the host nucleus. The catalysed reaction is Hydrolyzes single-stranded DNA or mismatched double-stranded DNA and polynucleotides, releasing free uracil.. Functionally, excises uracil residues from the DNA which can arise as a result of misincorporation of dUMP residues by DNA polymerase or deamination of cytosines. Therefore may reduce deleterious uracil incorporation into the viral genome, particularly in terminally differentiated cells which lack DNA repair enzymes. The protein is Uracil-DNA glycosylase (UL2) of Sus scrofa (Pig).